The chain runs to 1072 residues: Carbamoyl phosphate synthase large chain (1072 aa).

The segment at methionine 1–glutamate 401 is carboxyphosphate synthetic domain. Arginine 129, arginine 169, glycine 175, glycine 176, lysine 208, isoleucine 210, glutamate 215, glycine 241, valine 242, histidine 243, glutamine 284, and glutamate 298 together coordinate ATP. One can recognise an ATP-grasp 1 domain in the interval arginine 133–valine 327. Mg(2+) is bound by residues glutamine 284, glutamate 298, and asparagine 300. Mn(2+) contacts are provided by glutamine 284, glutamate 298, and asparagine 300. Residues leucine 402–serine 546 are oligomerization domain. The segment at isoleucine 547–glycine 929 is carbamoyl phosphate synthetic domain. Residues glutamate 671–leucine 861 form the ATP-grasp 2 domain. The ATP site is built by arginine 707, arginine 746, glutamate 752, glycine 777, valine 778, histidine 779, serine 780, glutamine 820, and glutamate 832. Glutamine 820, glutamate 832, and asparagine 834 together coordinate Mg(2+). Glutamine 820, glutamate 832, and asparagine 834 together coordinate Mn(2+). Positions isoleucine 930–alanine 1072 constitute an MGS-like domain. Residues isoleucine 930–alanine 1072 form an allosteric domain region.

This sequence belongs to the CarB family. Composed of two chains; the small (or glutamine) chain promotes the hydrolysis of glutamine to ammonia, which is used by the large (or ammonia) chain to synthesize carbamoyl phosphate. Tetramer of heterodimers (alpha,beta)4. Requires Mg(2+) as cofactor. Mn(2+) is required as a cofactor.

It carries out the reaction hydrogencarbonate + L-glutamine + 2 ATP + H2O = carbamoyl phosphate + L-glutamate + 2 ADP + phosphate + 2 H(+). The enzyme catalyses hydrogencarbonate + NH4(+) + 2 ATP = carbamoyl phosphate + 2 ADP + phosphate + 2 H(+). It participates in amino-acid biosynthesis; L-arginine biosynthesis; carbamoyl phosphate from bicarbonate: step 1/1. Its pathway is pyrimidine metabolism; UMP biosynthesis via de novo pathway; (S)-dihydroorotate from bicarbonate: step 1/3. In terms of biological role, large subunit of the glutamine-dependent carbamoyl phosphate synthetase (CPSase). CPSase catalyzes the formation of carbamoyl phosphate from the ammonia moiety of glutamine, carbonate, and phosphate donated by ATP, constituting the first step of 2 biosynthetic pathways, one leading to arginine and/or urea and the other to pyrimidine nucleotides. The large subunit (synthetase) binds the substrates ammonia (free or transferred from glutamine from the small subunit), hydrogencarbonate and ATP and carries out an ATP-coupled ligase reaction, activating hydrogencarbonate by forming carboxy phosphate which reacts with ammonia to form carbamoyl phosphate. This Bacillus thuringiensis subsp. konkukian (strain 97-27) protein is Carbamoyl phosphate synthase large chain.